A 241-amino-acid polypeptide reads, in one-letter code: MHEEEIYTSLQWDIPTSEASQKCPSLSKCPGTWCIVTVISCVVCVGLLAASIFLGIKFSQVSSLVMEQRERLIRQDTALLNLTEWQRNHTLQLKSCQASLQRSLRSGSNCNPCPPNWIQNGKSCYYAFDRWETWNNSKKSCLKEGDSLLQIDSKEEMEFINLSIWKLKGGYEYWVGVFQDGPSGSWFWEDGSSPLSDLLPTDRQLSASQICGYLKDHTLISDNCSNWKYFICEKKAFGSCI.

The Cytoplasmic segment spans residues 1–34; the sequence is MHEEEIYTSLQWDIPTSEASQKCPSLSKCPGTWC. Positions 5–10 match the ITAM-like motif; the sequence is EIYTSL. The chain crosses the membrane as a helical; Signal-anchor for type II membrane protein span at residues 35–55; sequence IVTVISCVVCVGLLAASIFLG. Topologically, residues 56–241 are extracellular; that stretch reads IKFSQVSSLV…CEKKAFGSCI (186 aa). 2 N-linked (GlcNAc...) asparagine glycosylation sites follow: asparagine 81 and asparagine 88. Cysteines 113 and 124 form a disulfide. The C-type lectin domain occupies 120-233; that stretch reads NGKSCYYAFD…CSNWKYFICE (114 aa). Asparagine 135, asparagine 161, and asparagine 223 each carry an N-linked (GlcNAc...) asparagine glycan. Intrachain disulfides connect cysteine 141–cysteine 232 and cysteine 211–cysteine 224.

Homodimer. In terms of processing, N-glycosylated. In terms of tissue distribution, high expression in the spleen, moderate to low levels in several other tissues and cell types, but no detectable expression in skin dendritic cells or CD4(+) T-cells.

The protein localises to the membrane. Functionally, functions as an endocytic receptor on a small subset of myeloid cells specialized for the uptake and processing of material from dead cells. Recognizes filamentous form of actin in association with particular actin-binding domains of cytoskeletal proteins, including spectrin, exposed when cell membranes are damaged, and mediate the cross-presentation of dead-cell associated antigens in a Syk-dependent manner. This Rattus norvegicus (Rat) protein is C-type lectin domain family 9 member A (Clec9a).